We begin with the raw amino-acid sequence, 270 residues long: Putative tRNA (cytidine(32)/guanosine(34)-2'-O)-methyltransferase (270 aa).

5 residues coordinate S-adenosyl-L-methionine: glycine 53, tryptophan 55, aspartate 78, aspartate 94, and aspartate 119. Catalysis depends on lysine 159, which acts as the Proton acceptor.

This sequence belongs to the class I-like SAM-binding methyltransferase superfamily. RNA methyltransferase RlmE family. TRM7 subfamily.

The protein resides in the cytoplasm. It catalyses the reaction cytidine(32)/guanosine(34) in tRNA + 2 S-adenosyl-L-methionine = 2'-O-methylcytidine(32)/2'-O-methylguanosine(34) in tRNA + 2 S-adenosyl-L-homocysteine + 2 H(+). Functionally, methylates the 2'-O-ribose of nucleotides at positions 32 and 34 of the tRNA anticodon loop of substrate tRNAs. This Dictyostelium discoideum (Social amoeba) protein is Putative tRNA (cytidine(32)/guanosine(34)-2'-O)-methyltransferase (fsjA).